The following is a 277-amino-acid chain: Phosphate import ATP-binding protein PstB (277 aa).

Positions 31–272 (IEVPGLSLFY…PAKKQTEDYI (242 aa)) constitute an ABC transporter domain. 63-70 (GPSGCGKS) contributes to the ATP binding site.

This sequence belongs to the ABC transporter superfamily. Phosphate importer (TC 3.A.1.7) family. The complex is composed of two ATP-binding proteins (PstB), two transmembrane proteins (PstC and PstA) and a solute-binding protein (PstS).

The protein resides in the cell inner membrane. The catalysed reaction is phosphate(out) + ATP + H2O = ADP + 2 phosphate(in) + H(+). Its function is as follows. Part of the ABC transporter complex PstSACB involved in phosphate import. Responsible for energy coupling to the transport system. This chain is Phosphate import ATP-binding protein PstB, found in Pseudomonas fluorescens (strain Pf0-1).